The following is a 126-amino-acid chain: Glycine cleavage system H protein (126 aa).

A Lipoyl-binding domain is found at Val-22–Glu-104. Lys-63 is modified (N6-lipoyllysine).

Belongs to the GcvH family. The glycine cleavage system is composed of four proteins: P, T, L and H. It depends on (R)-lipoate as a cofactor.

Its function is as follows. The glycine cleavage system catalyzes the degradation of glycine. The H protein shuttles the methylamine group of glycine from the P protein to the T protein. Is also involved in protein lipoylation via its role as an octanoyl/lipoyl carrier protein intermediate. In Staphylococcus aureus (strain MSSA476), this protein is Glycine cleavage system H protein.